The primary structure comprises 170 residues: Peptide deformylase (170 aa).

Fe cation is bound by residues Cys-91 and His-133. Glu-134 is an active-site residue. His-137 contributes to the Fe cation binding site.

It belongs to the polypeptide deformylase family. Fe(2+) is required as a cofactor.

The catalysed reaction is N-terminal N-formyl-L-methionyl-[peptide] + H2O = N-terminal L-methionyl-[peptide] + formate. Removes the formyl group from the N-terminal Met of newly synthesized proteins. Requires at least a dipeptide for an efficient rate of reaction. N-terminal L-methionine is a prerequisite for activity but the enzyme has broad specificity at other positions. In Histophilus somni (strain 2336) (Haemophilus somnus), this protein is Peptide deformylase.